The primary structure comprises 500 residues: ADP,ATP carrier protein 5 (500 aa).

Helical transmembrane passes span 26–46 (LGKF…QNIL), 62–82 (IAGF…VIIY), 94–114 (IFYY…FVIY), 149–169 (YIVY…LLFW), 184–204 (FYTL…FLMM), 224–244 (ITLV…CCLL), 287–307 (LWLL…VEAV), 328–348 (LYIL…NNVM), 357–377 (AVIS…LIVF), 381–401 (ILSL…VSIG), and 469–489 (SISP…IYAV).

The protein belongs to the ADP/ATP translocase tlc family.

Its subcellular location is the cell membrane. Provides the rickettsial cell with host ATP in exchange for rickettsial ADP. This is an obligate exchange system. This energy acquiring activity is an important component of rickettsial parasitism. This Rickettsia typhi (strain ATCC VR-144 / Wilmington) protein is ADP,ATP carrier protein 5 (tlcE).